The chain runs to 528 residues: UDP-glucuronosyltransferase 2B30 (528 aa).

The N-terminal stretch at 1 to 23 (MSMKWTSALLLIQLSCYLSSGNC) is a signal peptide. Lys135 is subject to N6-succinyllysine. N-linked (GlcNAc...) asparagine glycosylation is present at Asn315. Residues 493–513 (VIGFLLACVATVIFIITKCLF) form a helical membrane-spanning segment.

It belongs to the UDP-glycosyltransferase family. In terms of tissue distribution, expressed in several tissues, including prostate, testis, mammary gland, kidney, adrenals and intestine.

It localises to the microsome membrane. Its subcellular location is the endoplasmic reticulum membrane. It carries out the reaction glucuronate acceptor + UDP-alpha-D-glucuronate = acceptor beta-D-glucuronoside + UDP + H(+). UDPGTs are of major importance in the conjugation and subsequent elimination of potentially toxic xenobiotics and endogenous compounds. This isozyme has glucuronidating capacity on testosterone, dihydrotestosterone, 5-alpha-androstane-3-alpha,17-beta-diol, androsterone, oestradiol, tetrahydroaldosterone and tetrahydrocortisone. This enzyme is essential to inactivation of several steroids. In Macaca fascicularis (Crab-eating macaque), this protein is UDP-glucuronosyltransferase 2B30 (UGT2B30).